The following is a 311-amino-acid chain: Acetyl-coenzyme A carboxylase carboxyl transferase subunit alpha (311 aa).

Residues 34 to 286 (EKDLQKEASK…KEYYLQNIRE (253 aa)) form the CoA carboxyltransferase C-terminal domain.

This sequence belongs to the AccA family. As to quaternary structure, acetyl-CoA carboxylase is a heterohexamer composed of biotin carboxyl carrier protein (AccB), biotin carboxylase (AccC) and two subunits each of ACCase subunit alpha (AccA) and ACCase subunit beta (AccD).

It localises to the cytoplasm. It catalyses the reaction N(6)-carboxybiotinyl-L-lysyl-[protein] + acetyl-CoA = N(6)-biotinyl-L-lysyl-[protein] + malonyl-CoA. Its pathway is lipid metabolism; malonyl-CoA biosynthesis; malonyl-CoA from acetyl-CoA: step 1/1. In terms of biological role, component of the acetyl coenzyme A carboxylase (ACC) complex. First, biotin carboxylase catalyzes the carboxylation of biotin on its carrier protein (BCCP) and then the CO(2) group is transferred by the carboxyltransferase to acetyl-CoA to form malonyl-CoA. This is Acetyl-coenzyme A carboxylase carboxyl transferase subunit alpha from Nitratiruptor sp. (strain SB155-2).